The chain runs to 872 residues: Serine/threonine-protein phosphatase 1 regulatory subunit 10 (872 aa).

Residues M1–D348 are interaction with TOX4. Residues K73–Q147 form the TFIIS N-terminal domain. 4 disordered regions span residues Q147–L213, S247–P270, K307–T398, and V534–D837. 2 stretches are compositionally biased toward basic and acidic residues: residues A153 to S166 and P174 to K196. K179 participates in a covalent cross-link: Glycyl lysine isopeptide (Lys-Gly) (interchain with G-Cter in SUMO2). Positions A248–P258 are enriched in low complexity. A Glycyl lysine isopeptide (Lys-Gly) (interchain with G-Cter in SUMO2) cross-link involves residue K262. S313 is modified (phosphoserine). Residues K325–S336 are compositionally biased toward low complexity. Residues P357–A433 form a necessary for interaction with PPP1CA region. S382 bears the Phosphoserine mark. Residues G393–R408 are necessary for interaction with PPP1CC. A PP1-binding motif motif is present at residues R394 to V423. At T398 the chain carries Phosphothreonine; by PKA. The segment at T418 to L619 is interaction with WDR82. Residues G540 to G551 are compositionally biased toward gly residues. Phosphoserine is present on residues S545 and S591. A compositionally biased stretch (polar residues) spans E583–H595. A compositionally biased stretch (basic and acidic residues) spans P596 to K611. The segment covering P644–H655 has biased composition (pro residues). R665 carries the omega-N-methylarginine modification. Residues R674–G690 are compositionally biased toward low complexity. 2 positions are modified to omega-N-methylarginine: R693 and R737. Residues A724–G762 are compositionally biased toward gly residues. Residues P795–G835 show a composition bias toward basic and acidic residues. The segment at M838–V866 adopts a C3H1-type zinc-finger fold.

Component of the PNUTS-PP1 complex (also named PTW/PP1 complex), composed of PPP1R10/PNUTS, TOX4, WDR82, and PPP1CA (or PPP1CB or PPP1CC). Phosphorylated on Thr-398 by PKA within the region necessary for interaction with PPP1CA. In terms of tissue distribution, expressed in testis, brain and intestine (at protein level). Highly expressed in testis.

The protein localises to the nucleus. It is found in the chromosome. Functionally, substrate-recognition component of the PNUTS-PP1 protein phosphatase complex, a protein phosphatase 1 (PP1) complex that promotes RNA polymerase II transcription pause-release, allowing transcription elongation. Promoter-proximal pausing by RNA polymerase II is a transcription halt following transcription initiation but prior to elongation, which acts as a checkpoint to control that transcripts are favorably configured for transcriptional elongation. The PNUTS-PP1 complex mediates the release of RNA polymerase II from promoter-proximal region of genes by catalyzing dephosphorylation of proteins involved in transcription, such as AFF4, CDK9, MEPCE, INTS12, NCBP1, POLR2M/GDOWN1 and SUPT6H. The PNUTS-PP1 complex also regulates RNA polymerase II transcription termination by mediating dephosphorylation of SUPT5H in termination zones downstream of poly(A) sites, thereby promoting deceleration of RNA polymerase II transcription. PNUTS-PP1 complex is also involved in the response to replication stress by mediating dephosphorylation of POLR2A at 'Ser-5' of the CTD, promoting RNA polymerase II degradation. The PNUTS-PP1 complex also plays a role in the control of chromatin structure and cell cycle progression during the transition from mitosis into interphase. PNUTS-PP1 complex mediates dephosphorylation of MYC, promoting MYC stability by preventing MYC ubiquitination by the SCF(FBXW7) complex. In addition to acts as a substrate-recognition component, PPP1R10/PNUTS also acts as a nuclear targeting subunit for the PNUTS-PP1 complex. In some context, PPP1R10/PNUTS also acts as an inhibitor of protein phosphatase 1 (PP1) activity by preventing access to substrates. This is Serine/threonine-protein phosphatase 1 regulatory subunit 10 from Rattus norvegicus (Rat).